The sequence spans 218 residues: Sulfite reductase, assimilatory-type (218 aa).

The [4Fe-4S] cluster site is built by Cys91, Cys97, Cys131, and Cys135. Cys135 contributes to the siroheme binding site.

Functionally, this enzyme catalyzes the 6-electron reduction of sulfite to sulfide. This is one of several activities required for the biosynthesis of L-cysteine from sulfate. In Nitratidesulfovibrio vulgaris (strain ATCC 29579 / DSM 644 / CCUG 34227 / NCIMB 8303 / VKM B-1760 / Hildenborough) (Desulfovibrio vulgaris), this protein is Sulfite reductase, assimilatory-type.